A 394-amino-acid chain; its full sequence is Probable purine permease 23 (394 aa).

Over residues 1–20 (MEMTEASKHTTTHEESEHVQ) the composition is skewed to basic and acidic residues. The tract at residues 1–24 (MEMTEASKHTTTHEESEHVQNPEP) is disordered. The residue at position 29 (serine 29) is a Phosphoserine. 10 consecutive transmembrane segments (helical) span residues 43–63 (ISVLICLFLVLLGDSLVILLL), 85–105 (WMQALIQNAAFPILIPLFFIF), 124–144 (LILLYFSLGVLVAAHSKLYAL), 152–172 (GFFMLISGSQLIFTLIFTAII), 180–200 (WIIISIVLILVSYAFGGPVFS), 211–231 (GIQAWLTFAASVAFALSLCLV), 254–274 (VLEMQICVSSVASVVCLVGLF), 301–321 (VGLALSWQVWAVGLIGLVLYV), 328–348 (IVHMCASPLMAFIVVLAFDFI), and 352–372 (FSWPRIGALIGSVLALGSYFY).

Belongs to the purine permeases (TC 2.A.7.14) family.

Its subcellular location is the membrane. This chain is Probable purine permease 23 (PUP23), found in Arabidopsis thaliana (Mouse-ear cress).